Reading from the N-terminus, the 257-residue chain is Ribosomal RNA small subunit methyltransferase J (257 aa).

S-adenosyl-L-methionine-binding positions include 107–108 (RD), 123–124 (ER), and D177.

The protein belongs to the methyltransferase superfamily. RsmJ family.

It is found in the cytoplasm. It carries out the reaction guanosine(1516) in 16S rRNA + S-adenosyl-L-methionine = N(2)-methylguanosine(1516) in 16S rRNA + S-adenosyl-L-homocysteine + H(+). Specifically methylates the guanosine in position 1516 of 16S rRNA. The sequence is that of Ribosomal RNA small subunit methyltransferase J from Haemophilus influenzae (strain PittGG).